The sequence spans 238 residues: Large ribosomal subunit protein uL1 (238 aa).

This sequence belongs to the universal ribosomal protein uL1 family. In terms of assembly, part of the 50S ribosomal subunit.

Functionally, binds directly to 23S rRNA. The L1 stalk is quite mobile in the ribosome, and is involved in E site tRNA release. In terms of biological role, protein L1 is also a translational repressor protein, it controls the translation of the L11 operon by binding to its mRNA. In Trichodesmium erythraeum (strain IMS101), this protein is Large ribosomal subunit protein uL1.